A 543-amino-acid polypeptide reads, in one-letter code: 2,3-bisphosphoglycerate-independent phosphoglycerate mutase (543 aa).

Positions 24 and 74 each coordinate Mn(2+). Ser74 acts as the Phosphoserine intermediate in catalysis. Substrate-binding positions include His135, Arg165–Asp166, Arg197, Arg203, Arg268–Arg271, and Lys341. Residues Asp408, His412, Asp449, His450, and His467 each contribute to the Mn(2+) site.

Belongs to the BPG-independent phosphoglycerate mutase family. As to quaternary structure, monomer. Requires Mn(2+) as cofactor.

The catalysed reaction is (2R)-2-phosphoglycerate = (2R)-3-phosphoglycerate. The protein operates within carbohydrate degradation; glycolysis; pyruvate from D-glyceraldehyde 3-phosphate: step 3/5. Its function is as follows. Catalyzes the interconversion of 2-phosphoglycerate and 3-phosphoglycerate. The sequence is that of 2,3-bisphosphoglycerate-independent phosphoglycerate mutase from Parasynechococcus marenigrum (strain WH8102).